Here is a 445-residue protein sequence, read N- to C-terminus: TNF receptor-associated factor family protein DDB_G0290971 (445 aa).

The RING-type; degenerate zinc-finger motif lies at 23–67 (CPICFDLYYSSSSKKEVFQCRDGHLACKSCWSDSLLNKKECMICR). TRAF-type zinc fingers lie at residues 133 to 186 (KHQV…QLDA) and 186 to 242 (AHAL…ESID). Positions 269–307 (QLELVECKNQIYQINNKYEKLLERVIKLEQLSMDASNKL) form a coiled coil. Positions 314 to 441 (KNSIIFATFS…EDKLVIGLRI (128 aa)) constitute an MATH domain.

The protein belongs to the TNF receptor-associated factor family. A subfamily.

The protein resides in the cytoplasm. Its function is as follows. Probable adapter protein and signal transducer that links members of the tumor necrosis factor receptor family to different signaling pathways by association with the receptor cytoplasmic domain and kinases. This is TNF receptor-associated factor family protein DDB_G0290971 from Dictyostelium discoideum (Social amoeba).